The sequence spans 400 residues: Deoxyguanosinetriphosphate triphosphohydrolase-like protein (400 aa).

The HD domain maps to 73 to 215 (RLTHSIEVSQ…AAIADDIAYN (143 aa)).

It belongs to the dGTPase family. Type 2 subfamily.

The polypeptide is Deoxyguanosinetriphosphate triphosphohydrolase-like protein (Bartonella henselae (strain ATCC 49882 / DSM 28221 / CCUG 30454 / Houston 1) (Rochalimaea henselae)).